The sequence spans 234 residues: Small ribosomal subunit protein uS2 (234 aa).

Belongs to the universal ribosomal protein uS2 family.

This is Small ribosomal subunit protein uS2 from Clostridium kluyveri (strain NBRC 12016).